The following is a 225-amino-acid chain: Methylthioribulose-1-phosphate dehydratase (225 aa).

Zn(2+) is bound by residues His106 and His108.

Belongs to the aldolase class II family. MtnB subfamily. It depends on Zn(2+) as a cofactor.

It carries out the reaction 5-(methylsulfanyl)-D-ribulose 1-phosphate = 5-methylsulfanyl-2,3-dioxopentyl phosphate + H2O. It participates in amino-acid biosynthesis; L-methionine biosynthesis via salvage pathway; L-methionine from S-methyl-5-thio-alpha-D-ribose 1-phosphate: step 2/6. Functionally, catalyzes the dehydration of methylthioribulose-1-phosphate (MTRu-1-P) into 2,3-diketo-5-methylthiopentyl-1-phosphate (DK-MTP-1-P). This is Methylthioribulose-1-phosphate dehydratase from Xanthomonas oryzae pv. oryzae (strain PXO99A).